The sequence spans 314 residues: Galectin-12 (314 aa).

2 Galectin domains span residues 27–161 (YGTT…VGFL) and 190–314 (CSRA…CVHC).

It localises to the nucleus. Binds lactose. May participate in the apoptosis of adipocytes. This Mus musculus (Mouse) protein is Galectin-12 (Lgals12).